We begin with the raw amino-acid sequence, 202 residues long: Cryptic protein (202 aa).

A signal peptide spans 1 to 35; that stretch reads MRANSPTQGISLKMHQARPLFLVTVALQLIGLGYS. N65 is a glycosylation site (N-linked (GlcNAc...) asparagine). The region spanning 94–123 is the EGF-like domain; that stretch reads PVSRCCHNGGTCVLGSFCVCPAYFTGRYCE. 3 disulfide bridges follow: C98–C105, C99–C111, and C113–C122. A lipid anchor (GPI-anchor amidated aspartate) is attached at D166. The propeptide at 167-202 is removed in mature form; that stretch reads LKSFLSSGARGSRECSIPSLLLLVLCLLLQGVAGKG.

It belongs to the EGF-CFC (Cripto-1/FRL1/Cryptic) family. Post-translationally, N-glycosylated. As to expression, no expressed in adult tissues.

The protein resides in the cell membrane. It localises to the secreted. Functionally, nodal coreceptor involved in the correct establishment of the left-right axis. May play a role in mesoderm and/or neural patterning during gastrulation. This chain is Cryptic protein (Cfc1), found in Mus musculus (Mouse).